The following is a 304-amino-acid chain: Type II methyltransferase M.HindV (304 aa).

Residues 1–299 (MKCVDLFSGC…SAIINFEKEP (299 aa)) form the SAM-dependent MTase C5-type domain. Residue C75 is part of the active site.

Belongs to the class I-like SAM-binding methyltransferase superfamily. C5-methyltransferase family.

It carries out the reaction a 2'-deoxycytidine in DNA + S-adenosyl-L-methionine = a 5-methyl-2'-deoxycytidine in DNA + S-adenosyl-L-homocysteine + H(+). A methylase, recognizes the double-stranded sequence 5'-GRCGYC-3', methylates C-? on both strands, and protects the DNA from cleavage by the HindV endonuclease. This is Type II methyltransferase M.HindV (hindVM) from Haemophilus influenzae (strain ATCC 51907 / DSM 11121 / KW20 / Rd).